A 518-amino-acid polypeptide reads, in one-letter code: Probable glycosyltransferase At5g03795 (518 aa).

Topologically, residues 1-25 (MGDEDVDGKCKNMSACSSTTSYSTK) are cytoplasmic. The chain crosses the membrane as a helical; Signal-anchor for type II membrane protein span at residues 26–46 (LFLFMVPLVVISGFVFVNIGP). Topologically, residues 47 to 518 (KDSTSLLTSL…RRLNVKIREV (472 aa)) are lumenal. N-linked (GlcNAc...) asparagine glycans are attached at residues asparagine 104, asparagine 113, asparagine 120, asparagine 282, and asparagine 320.

This sequence belongs to the glycosyltransferase 47 family.

It localises to the golgi apparatus membrane. Functionally, may be involved in cell wall biosynthesis. This chain is Probable glycosyltransferase At5g03795, found in Arabidopsis thaliana (Mouse-ear cress).